The chain runs to 59 residues: Large ribosomal subunit protein uL30 (59 aa).

The protein belongs to the universal ribosomal protein uL30 family. In terms of assembly, part of the 50S ribosomal subunit.

The chain is Large ribosomal subunit protein uL30 from Clostridium botulinum (strain ATCC 19397 / Type A).